Reading from the N-terminus, the 131-residue chain is Large-conductance mechanosensitive channel (131 aa).

3 consecutive transmembrane segments (helical) span residues 8–28 (FAIRGNVIDLAVGVIIGGAFG), 30–50 (IVSSLVNDIIMPLVGLILGGI), and 67–87 (GAFIQTVVDFLIIAFSIFLFV).

Belongs to the MscL family. As to quaternary structure, homopentamer.

The protein resides in the cell membrane. In terms of biological role, channel that opens in response to stretch forces in the membrane lipid bilayer. May participate in the regulation of osmotic pressure changes within the cell. This Geobacillus kaustophilus (strain HTA426) protein is Large-conductance mechanosensitive channel.